Here is a 347-residue protein sequence, read N- to C-terminus: UDP-3-O-acylglucosamine N-acyltransferase (347 aa).

Histidine 248 acts as the Proton acceptor in catalysis.

This sequence belongs to the transferase hexapeptide repeat family. LpxD subfamily. Homotrimer.

The enzyme catalyses a UDP-3-O-[(3R)-3-hydroxyacyl]-alpha-D-glucosamine + a (3R)-hydroxyacyl-[ACP] = a UDP-2-N,3-O-bis[(3R)-3-hydroxyacyl]-alpha-D-glucosamine + holo-[ACP] + H(+). Its pathway is bacterial outer membrane biogenesis; LPS lipid A biosynthesis. Its function is as follows. Catalyzes the N-acylation of UDP-3-O-acylglucosamine using 3-hydroxyacyl-ACP as the acyl donor. Is involved in the biosynthesis of lipid A, a phosphorylated glycolipid that anchors the lipopolysaccharide to the outer membrane of the cell. The chain is UDP-3-O-acylglucosamine N-acyltransferase from Synechococcus sp. (strain CC9902).